The sequence spans 309 residues: DNA-directed RNA polymerase subunit alpha (309 aa).

Residues 1 to 227 (MTFQVECVES…ALFEPLKNVS (227 aa)) form an alpha N-terminal domain (alpha-NTD) region. Residues 237-309 (EPTPESQTPI…GIKLQESKVS (73 aa)) form an alpha C-terminal domain (alpha-CTD) region.

The protein belongs to the RNA polymerase alpha chain family. In terms of assembly, in cyanobacteria the RNAP catalytic core is composed of 2 alpha, 1 beta, 1 beta', 1 gamma and 1 omega subunit. When a sigma factor is associated with the core the holoenzyme is formed, which can initiate transcription.

It carries out the reaction RNA(n) + a ribonucleoside 5'-triphosphate = RNA(n+1) + diphosphate. DNA-dependent RNA polymerase catalyzes the transcription of DNA into RNA using the four ribonucleoside triphosphates as substrates. The chain is DNA-directed RNA polymerase subunit alpha from Synechococcus elongatus (strain ATCC 33912 / PCC 7942 / FACHB-805) (Anacystis nidulans R2).